A 328-amino-acid polypeptide reads, in one-letter code: UPF0104 membrane protein AF_2231 (328 aa).

Helical transmembrane passes span 31–51 (NWLL…LWAL), 116–136 (ILDS…TGFS), 139–159 (FGFK…YILY), 221–241 (LVTL…LVAL), 245–265 (AYFL…LVPL), and 277–297 (MAYL…VGLW).

This sequence belongs to the UPF0104 family.

The protein localises to the cell membrane. This is UPF0104 membrane protein AF_2231 from Archaeoglobus fulgidus (strain ATCC 49558 / DSM 4304 / JCM 9628 / NBRC 100126 / VC-16).